The primary structure comprises 864 residues: MHERYVPADVEAAAQGDWRAADAYKTREDSQKPKFYCVSMLPYPSGKLHMGHVRNYTINDVMYRYLRMNGYNTLMPMGWDAFGMPAENAAMANGVPPAKWTYDNIDYMKGQMQSMGLAIDWSREIATCKPDYYKWNQWLFLKMLEKGIAYKKTGTVNWDPVDQTVLANEQVIDGRGWRSGALVEKREIPMYYLRITQYADELLNDLDGLGWPERVKIMQQNWIGKSFGVNFGFPYELDGEKALLRVFTTRADTILGVTFCAVAAEHPLATRLAQGKPELQAFIDECKRGGVAEADVATMEKKGVATGFSVSHPLTGEPVEVWIGNYVLMSYGEGAVMGVPGHDERDFAFAKKYGLPIKQVIASEGQTYSLDAWQEWYGDKETAVCVNSGKYDGLRYADAVDAVAADLKAGGYGDKQVTWRLRDWGVSRQRYWGTPIPIIHCPSCGDVPVPEQDLPVVLPEDLVPDGSGNPLAKSEAFLNCSCPKCGAAAKRETDTMDTFVDSSWYFSRYTAPDADTMVDARTDYWMPMDQYIGGIEHAILHLLYSRFWTKVMRDLGLVKFGEPAKNLLTQGMVLNETFYREDASGKKTWYNPADVTVTHDDKGRPVGATLNTDGQPVVLGGIEKMSKSKNNGVDPQVLIDQYGADTARLFTMFAAPPEQQLEWSGAGVEGASRFLRRVWSFGATNREALATRAGFDAAALGDADKALRREIYSVLKQADFDYQRLQYNTVVSAAMKMLNAIDGAKGATPAVLRETYGVLLRVLYPVVPHVTFELWKALGYADEFGPLLDAPWPKVDEAALEQAEIELVLQVNGKVRGALKVAKDASREAIEAAAVADEAFAKFSDGKPAKKIVVVPGRLVNIVV.

The 'HIGH' region motif lies at 42-52; that stretch reads PYPSGKLHMGH. Residues 624-628 carry the 'KMSKS' region motif; sequence KMSKS. K627 is a binding site for ATP.

Belongs to the class-I aminoacyl-tRNA synthetase family.

It localises to the cytoplasm. It catalyses the reaction tRNA(Leu) + L-leucine + ATP = L-leucyl-tRNA(Leu) + AMP + diphosphate. This is Leucine--tRNA ligase from Burkholderia ambifaria (strain ATCC BAA-244 / DSM 16087 / CCUG 44356 / LMG 19182 / AMMD) (Burkholderia cepacia (strain AMMD)).